The chain runs to 155 residues: Probable methanogenesis regulatory protein FilR2 (155 aa).

Residues 18 to 142 (IILLVEDNNA…DLKRTVEEIK (125 aa)) form the Response regulatory domain. D75 carries the 4-aspartylphosphate modification.

Post-translationally, phosphorylated by FilI.

Its function is as follows. Member of the two-component regulatory system FilI/FilRs, which is involved in the regulation of methanogenesis. The protein is Probable methanogenesis regulatory protein FilR2 of Methanothrix harundinacea (strain 6Ac) (Methanosaeta harundinacea).